Reading from the N-terminus, the 128-residue chain is Small ribosomal subunit protein uS14m (128 aa).

The protein belongs to the universal ribosomal protein uS14 family. As to quaternary structure, component of the mitochondrial ribosome small subunit (28S) which comprises a 12S rRNA and about 30 distinct proteins. Interacts with LIAT1.

It is found in the mitochondrion. This chain is Small ribosomal subunit protein uS14m (Mrps14), found in Mus musculus (Mouse).